Consider the following 233-residue polypeptide: Snake venom serine protease ussurase (233 aa).

Positions 1 to 224 (VIGGVECNIN…YTDWIQSIIS (224 aa)) constitute a Peptidase S1 domain. Cystine bridges form between Cys7–Cys138, Cys25–Cys41, Cys73–Cys231, Cys117–Cys185, Cys149–Cys164, and Cys175–Cys200. His40 serves as the catalytic Charge relay system. N-linked (GlcNAc...) asparagine glycosylation is present at Asn54. Asp85 functions as the Charge relay system in the catalytic mechanism. Ser179 (charge relay system) is an active-site residue.

Belongs to the peptidase S1 family. Snake venom subfamily. In terms of assembly, monomer. As to expression, expressed by the venom gland.

Its subcellular location is the secreted. Its function is as follows. Snake venom serine protease that may act in the hemostasis system of the prey. The polypeptide is Snake venom serine protease ussurase (Gloydius ussuriensis (Ussuri mamushi)).